A 442-amino-acid polypeptide reads, in one-letter code: Type 3 secretion system ATPase (442 aa).

Residue 173–178 coordinates ATP; it reads GVGKST.

This sequence belongs to the ATPase alpha/beta chains family. T3SS ATPase subfamily. As to quaternary structure, the core secretion machinery of the T3SS is composed of approximately 20 different proteins, including cytoplasmic components, a base, an export apparatus and a needle. This subunit is part of the cytosolic complex. Forms homohexamers.

It localises to the cytoplasm. The enzyme catalyses ATP + H2O + cellular proteinSide 1 = ADP + phosphate + cellular proteinSide 2.. In terms of biological role, ATPase component of the type III secretion system (T3SS), also called injectisome, which is used to inject bacterial effector proteins into eukaryotic host cells. Acts as a molecular motor to provide the energy that is required for the export of proteins. Required for type III secretion apparatus (T3SA) formation, proper protein secretion, host cell invasion and virulence. May play a critical role in T3SS substrate recognition, disassembly of the effector/chaperone complex and unfolding of the effector in an ATP-dependent manner prior to secretion. The protein is Type 3 secretion system ATPase of Xanthomonas euvesicatoria.